We begin with the raw amino-acid sequence, 495 residues long: 3-octaprenyl-4-hydroxybenzoate carboxy-lyase (495 aa).

A Mn(2+)-binding site is contributed by Asn-171. Prenylated FMN is bound by residues 174–176 (IYR), 188–190 (RWL), and 193–194 (RG). Glu-237 is a Mn(2+) binding site. The active-site Proton donor is Asp-286.

The protein belongs to the UbiD family. As to quaternary structure, homohexamer. The cofactor is prenylated FMN. Requires Mn(2+) as cofactor.

The protein localises to the cell membrane. The enzyme catalyses a 4-hydroxy-3-(all-trans-polyprenyl)benzoate + H(+) = a 2-(all-trans-polyprenyl)phenol + CO2. It functions in the pathway cofactor biosynthesis; ubiquinone biosynthesis. In terms of biological role, catalyzes the decarboxylation of 3-octaprenyl-4-hydroxy benzoate to 2-octaprenylphenol, an intermediate step in ubiquinone biosynthesis. The protein is 3-octaprenyl-4-hydroxybenzoate carboxy-lyase of Hamiltonella defensa subsp. Acyrthosiphon pisum (strain 5AT).